A 940-amino-acid polypeptide reads, in one-letter code: Isoleucine--tRNA ligase (940 aa).

The short motif at 58 to 68 (PYANGSIHIGH) is the 'HIGH' region element. An L-isoleucyl-5'-AMP-binding site is contributed by E564. The 'KMSKS' region motif lies at 605–609 (KMSKS). K608 contributes to the ATP binding site. Zn(2+) is bound by residues C903, C906, C923, and C926.

Belongs to the class-I aminoacyl-tRNA synthetase family. IleS type 1 subfamily. In terms of assembly, monomer. Zn(2+) is required as a cofactor.

It is found in the cytoplasm. The enzyme catalyses tRNA(Ile) + L-isoleucine + ATP = L-isoleucyl-tRNA(Ile) + AMP + diphosphate. Catalyzes the attachment of isoleucine to tRNA(Ile). As IleRS can inadvertently accommodate and process structurally similar amino acids such as valine, to avoid such errors it has two additional distinct tRNA(Ile)-dependent editing activities. One activity is designated as 'pretransfer' editing and involves the hydrolysis of activated Val-AMP. The other activity is designated 'posttransfer' editing and involves deacylation of mischarged Val-tRNA(Ile). In Shewanella sediminis (strain HAW-EB3), this protein is Isoleucine--tRNA ligase.